Here is a 243-residue protein sequence, read N- to C-terminus: uncharacterized protein (243 aa).

A signal peptide spans 1–19 (MDELALSFSLTCLLPENRA). Asn-136 carries an N-linked (GlcNAc...) asparagine glycan.

The protein localises to the secreted. This is an uncharacterized protein from Homo sapiens (Human).